The chain runs to 185 residues: MSYESPQAAAVAWLPYSQLATDIDQPTLDWLFDEGSLTRRLTRLSIDHFSVTPLFEGWQPLRDDECQALGIAAGAEGWVREVYLRGHGQPWVFARSVASRSALERGGLDLETLGSRSLGELLFCDQAFIRHPLEVCTYPQAWLPSEAAHAALWGRRSRFERNGLDLLVAEVFLPALWQAAKEENR.

The substrate site is built by Arg-80, Leu-118, and Glu-170.

It belongs to the UbiC family.

It is found in the cytoplasm. The enzyme catalyses chorismate = 4-hydroxybenzoate + pyruvate. It participates in cofactor biosynthesis; ubiquinone biosynthesis. Its function is as follows. Removes the pyruvyl group from chorismate, with concomitant aromatization of the ring, to provide 4-hydroxybenzoate (4HB) for the ubiquinone pathway. The sequence is that of Probable chorismate pyruvate-lyase from Pseudomonas putida (strain ATCC 47054 / DSM 6125 / CFBP 8728 / NCIMB 11950 / KT2440).